The following is a 341-amino-acid chain: MSKPNNSTAPLPFPILIGDIGGTNARFSILTDAYAEPKQFPNVRTADFATIDEAIQQGVLDKTAVQPRSAILAVAGPINDDEIPLTNCDWVVRPKTMIEGLGMEDVLVVNDFEAQALAIAALSDENRERIGDATRDMIASRVVLGPGTGLGVGGLVHAQHSWIPVPGEGGHVDLGPRSKRDYDIFPHIETIEGRVSAEQILCGRGLVNLYHAICVVDGIEPTMKDPADITSHALAGSDKAAVETVSLFATYLGRVAGDLAMVFMARGGVYLSGGISQKIIPALKKPEFRIAFEDKAPHTALLRTIPTYVVTHPLAALAGLSSYARMPANFGVSTEGRRWRR.

Residue 18–23 participates in ATP binding; the sequence is GDIGGT.

Belongs to the bacterial glucokinase family.

The protein localises to the cytoplasm. It carries out the reaction D-glucose + ATP = D-glucose 6-phosphate + ADP + H(+). In Rhizobium johnstonii (strain DSM 114642 / LMG 32736 / 3841) (Rhizobium leguminosarum bv. viciae), this protein is Glucokinase.